The primary structure comprises 393 residues: Arrestin-C (393 aa).

Positions 371 to 386 are enriched in basic and acidic residues; the sequence is FARQEDGGEEKQKALA. The disordered stretch occupies residues 371-393; sequence FARQEDGGEEKQKALAEEGDEGS.

This sequence belongs to the arrestin family. Homodimer; disulfide-linked in response to retinal illumination. Interacts with CXCR4; the interaction is dependent on the C-terminal phosphorylation of CXCR4 and modulates the calcium ion mobilization activity of CXCR4.

The protein resides in the photoreceptor inner segment. It localises to the cell projection. The protein localises to the cilium. It is found in the photoreceptor outer segment. In terms of biological role, may play a role in an as yet undefined retina-specific signal transduction. Could bind to photoactivated-phosphorylated red/green opsins. The sequence is that of Arrestin-C (ARR3) from Ictidomys tridecemlineatus (Thirteen-lined ground squirrel).